Reading from the N-terminus, the 138-residue chain is Cellular retinoic acid-binding protein 2 (138 aa).

Residues 21–31 carry the Nuclear localization signal motif; sequence KVLGVNVMLRK. Lys102 participates in a covalent cross-link: Glycyl lysine isopeptide (Lys-Gly) (interchain with G-Cter in SUMO). 133 to 135 is an all-trans-retinoate binding site; that stretch reads RVY.

This sequence belongs to the calycin superfamily. Fatty-acid binding protein (FABP) family. In terms of assembly, interacts with importin alpha, RXR and RARA. Sumoylated in response to retinoic acid binding, sumoylation is critical for dissociation from ER and subsequent nuclear translocation.

The protein localises to the cytoplasm. It localises to the endoplasmic reticulum. It is found in the nucleus. Transports retinoic acid to the nucleus. Regulates the access of retinoic acid to the nuclear retinoic acid receptors. This is Cellular retinoic acid-binding protein 2 (CRABP2) from Bos taurus (Bovine).